A 1053-amino-acid polypeptide reads, in one-letter code: MAFLKLRDQPSLVQAIFNGDPDEVRALIFKKEDVNFQDNEKRTPLHAAAYLGDAEIIELLILSGARVNAKDSKWLTPLHRAVASCSEEAVQVLLKHSADVNARDKNWQTPLHIAAANKAVKCAEALVPLLSNVNVSDRAGRTALHHAAFSGHGEMVKLLLSRGANINAFDKKDRRAIHWAAYMGHIEVVKLLVSHGAEVTCKDKKSYTPLHAAASSGMISVVKYLLDLGVDMNEPNAYGNTPLHVACYNGQDVVVNELIDCGAIVNQKNEKGFTPLHFAAASTHGALCLELLVGNGADVNMKSKDGKTPLHMTALHGRFSRSQTIIQSGAVIDCEDKNGNTPLHIAARYGHELLINTLITSGADTAKRGIHGMFPLHLAALSGFSDCCRKLLSSGFDIDTPDDFGRTCLHAAAAGGNLECLNLLLNTGADFNKKDKFGRSPLHYAAANCNYQCLFALVGSGASVNDLDERGCTPLHYAATSDTDGKCLEYLLRNDANPGIRDKQGYNAVHYSAAYGHRLCLQLIASETPLDVLMETSGTDMLSDSDNRATISPLHLAAYHGHHQALEVLVQSLLDLDVRNSSGRTPLDLAAFKGHVECVDVLINQGASILVKDYILKRTPIHAAATNGHSECLRLLIGNAEPQNAVDIQDGNGQTPLMLSVLNGHTDCVYSLLNKGANVDAKDKWGRTALHRGAVTGHEECVDALLQHGAKCLLRDSRGRTPIHLSAACGHIGVLGALLQSAASMDANPATADNHGYTALHWACYNGHETCVELLLEQEVFQKTEGNAFSPLHCAVINDNEGAAEMLIDTLGASIVNATDSKGRTPLHAAAFTDHVECLQLLLSHNAQVNSVDSTGKTPLMMAAENGQTNTVEMLVSSASAELTLQDNSKNTALHLACSKGHETSALLILEKITDRNLINATNAALQTPLHVAARNGLTMVVQELLGKGASVLAVDENGYTPALACAPNKDVADCLALILATMMPVSSSSPLSSLTFNAINRYTNTSKTVSFEALPIMRNEPSSYCSFNNIGGEQEYLYTDVDELNDSDSETY.

27 ANK repeats span residues 40-69 (EKRT…RVNA), 73-102 (KWLT…DVNA), 106-135 (NWQT…NVNV), 139-168 (AGRT…NINA), 172-201 (KDRR…EVTC), 205-234 (KSYT…DMNE), 238-267 (YGNT…IVNQ), 271-301 (KGFT…DVNM), 305-334 (DGKT…VIDC), 338-367 (NGNT…DTAK), 371-400 (HGMF…DIDT), 404-433 (FGRT…DFNK), 437-466 (FGRS…SVND), 470-500 (RGCT…NPGI), 504-534 (QGYN…DVLM), 549-578 (ATIS…DLDV), 582-611 (SGRT…SILV), 616-645 (LKRT…PQNA), 652-681 (NGQT…NVDA), 685-714 (WGRT…KCLL), 718-747 (RGRT…SMDA), 755-784 (HGYT…FQKT), 787-817 (NAFS…SIVN), 822-851 (KGRT…QVNS), 855-885 (TGKT…ELTL), 889-918 (SKNT…DRNL), and 925-954 (ALQT…SVLA). Ser1007 and Ser1011 each carry phosphoserine.

As to quaternary structure, protein phosphatase 6 (PP6) holoenzyme is proposed to be a heterotrimeric complex formed by the catalytic subunit, a SAPS domain-containing subunit (PP6R) and an ankyrin repeat-domain containing regulatory subunit (ARS). Interacts with PPP6C, PPP6R1 and PPP6R3. Interacts with PPP1C and HNRPK. Ubiquitinated by the ECS(RAB40C) complex leading to its degradation and decreased PP6 activity.

The protein localises to the nucleus. The protein resides in the nucleoplasm. Its subcellular location is the cytoplasm. It localises to the cytosol. It is found in the cell projection. The protein localises to the lamellipodium. Functionally, regulatory subunit of protein phosphatase 6 (PP6) that may be involved in the recognition of phosphoprotein substrates. Involved in the PP6-mediated dephosphorylation of NFKBIE opposing its degradation in response to TNF-alpha. Selectively inhibits the phosphatase activity of PPP1C. Targets PPP1C to modulate HNRPK phosphorylation. Involved in the PP6-mediated dephosphorylation of MOB1 and induced focal adhesion assembly during cell migration. This chain is Serine/threonine-protein phosphatase 6 regulatory ankyrin repeat subunit A, found in Homo sapiens (Human).